Consider the following 83-residue polypeptide: Three-finger toxin MALT0066C (83 aa).

An N-terminal signal peptide occupies residues 1 to 21 (MKTLLLTLVVVTIVCLDFGHT). 4 cysteine pairs are disulfide-bonded: C24/C45, C38/C62, C64/C75, and C76/C81.

The protein belongs to the three-finger toxin family. Short-chain subfamily. Type I alpha-neurotoxin sub-subfamily. Dimer. As to expression, expressed by the venom gland.

It localises to the secreted. Functionally, binds to muscle nicotinic acetylcholine receptor (nAChR) and inhibit acetylcholine from binding to the receptor, thereby impairing neuromuscular transmission. The polypeptide is Three-finger toxin MALT0066C (Micrurus altirostris (Uruguayan coral snake)).